We begin with the raw amino-acid sequence, 420 residues long: D-inositol 3-phosphate glycosyltransferase (420 aa).

A 1D-myo-inositol 3-phosphate-binding site is contributed by His13. Residues 19-20 (QP) and Gly27 contribute to the UDP-N-acetyl-alpha-D-glucosamine site. Residues 24–29 (DAGGMN), Lys82, Tyr115, Thr139, and Arg159 each bind 1D-myo-inositol 3-phosphate. UDP-N-acetyl-alpha-D-glucosamine-binding residues include Arg233, Lys238, and Val294. Mg(2+) contacts are provided by Phe303, Arg304, and Ala306. Glu316 and Glu324 together coordinate UDP-N-acetyl-alpha-D-glucosamine. Thr330 contacts Mg(2+).

Belongs to the glycosyltransferase group 1 family. MshA subfamily. In terms of assembly, homodimer.

It carries out the reaction 1D-myo-inositol 3-phosphate + UDP-N-acetyl-alpha-D-glucosamine = 1D-myo-inositol 2-acetamido-2-deoxy-alpha-D-glucopyranoside 3-phosphate + UDP + H(+). Its function is as follows. Catalyzes the transfer of a N-acetyl-glucosamine moiety to 1D-myo-inositol 3-phosphate to produce 1D-myo-inositol 2-acetamido-2-deoxy-glucopyranoside 3-phosphate in the mycothiol biosynthesis pathway. The protein is D-inositol 3-phosphate glycosyltransferase of Pseudarthrobacter chlorophenolicus (strain ATCC 700700 / DSM 12829 / CIP 107037 / JCM 12360 / KCTC 9906 / NCIMB 13794 / A6) (Arthrobacter chlorophenolicus).